The chain runs to 342 residues: 29 kDa ribonucleoprotein, chloroplastic (342 aa).

The transit peptide at 1-65 directs the protein to the chloroplast; it reads MSASASSLSA…PAEYPSRFVR (65 aa). Residues 99–177 enclose the RRM 1 domain; it reads LKLFVGNLSF…RPLRVNAGPP (79 aa). Residues Ser107 and Ser204 each carry the phosphoserine modification. Residues 167–255 form a disordered region; it reads GRPLRVNAGP…GSGSGSGSGS (89 aa). Residues 178–256 form a linker (Gly-rich) region; sequence PPKREESFSR…SGSGSGSGSG (79 aa). 2 stretches are compositionally biased toward gly residues: residues 190–237 and 245–255; these read RSGG…GYGG and SGSGSGSGSGS. Positions 257–335 constitute an RRM 2 domain; the sequence is NRLYVGNLSW…RQIRVSEAEA (79 aa).

The protein resides in the plastid. The protein localises to the chloroplast. Functionally, stabilizes specific chloroplast mRNAs. Required for normal chloroplast development under cold stress conditions by stabilizing transcripts of numerous mRNAs under these conditions. This is 29 kDa ribonucleoprotein, chloroplastic from Arabidopsis thaliana (Mouse-ear cress).